Here is a 98-residue protein sequence, read N- to C-terminus: (4S)-4-hydroxy-5-phosphonooxypentane-2,3-dione isomerase (98 aa).

One can recognise an ABM domain in the interval 2 to 91 (NVTLVEINIK…MSQPRQKRSF (90 aa)).

This sequence belongs to the LsrG family. As to quaternary structure, homodimer.

It localises to the cytoplasm. It catalyses the reaction (2S)-2-hydroxy-3,4-dioxopentyl phosphate = 3-hydroxy-2,4-dioxopentyl phosphate. In terms of biological role, involved in the degradation of phospho-AI-2, thereby terminating induction of the lsr operon and closing the AI-2 signaling cycle. Catalyzes the conversion of (4S)-4-hydroxy-5-phosphonooxypentane-2,3-dione (P-DPD) to 3-hydroxy-5-phosphonooxypentane-2,4-dione (P-HPD). The protein is (4S)-4-hydroxy-5-phosphonooxypentane-2,3-dione isomerase of Klebsiella pneumoniae subsp. pneumoniae (strain ATCC 700721 / MGH 78578).